The primary structure comprises 171 residues: 3-hydroxydecanoyl-[acyl-carrier-protein] dehydratase (171 aa).

H70 is a catalytic residue.

It belongs to the thioester dehydratase family. FabA subfamily. As to quaternary structure, homodimer.

It localises to the cytoplasm. The catalysed reaction is a (3R)-hydroxyacyl-[ACP] = a (2E)-enoyl-[ACP] + H2O. It carries out the reaction (3R)-hydroxydecanoyl-[ACP] = (2E)-decenoyl-[ACP] + H2O. The enzyme catalyses (2E)-decenoyl-[ACP] = (3Z)-decenoyl-[ACP]. Its pathway is lipid metabolism; fatty acid biosynthesis. Its function is as follows. Necessary for the introduction of cis unsaturation into fatty acids. Catalyzes the dehydration of (3R)-3-hydroxydecanoyl-ACP to E-(2)-decenoyl-ACP and then its isomerization to Z-(3)-decenoyl-ACP. Can catalyze the dehydratase reaction for beta-hydroxyacyl-ACPs with saturated chain lengths up to 16:0, being most active on intermediate chain length. This is 3-hydroxydecanoyl-[acyl-carrier-protein] dehydratase from Stenotrophomonas maltophilia (strain R551-3).